A 180-amino-acid polypeptide reads, in one-letter code: Large ribosomal subunit protein uL5 (180 aa).

The protein belongs to the universal ribosomal protein uL5 family. As to quaternary structure, part of the 50S ribosomal subunit; part of the 5S rRNA/L5/L18/L25 subcomplex. Contacts the 5S rRNA and the P site tRNA. Forms a bridge to the 30S subunit in the 70S ribosome.

In terms of biological role, this is one of the proteins that bind and probably mediate the attachment of the 5S RNA into the large ribosomal subunit, where it forms part of the central protuberance. In the 70S ribosome it contacts protein S13 of the 30S subunit (bridge B1b), connecting the 2 subunits; this bridge is implicated in subunit movement. Contacts the P site tRNA; the 5S rRNA and some of its associated proteins might help stabilize positioning of ribosome-bound tRNAs. The chain is Large ribosomal subunit protein uL5 from Chloroflexus aurantiacus (strain ATCC 29364 / DSM 637 / Y-400-fl).